The following is a 474-amino-acid chain: Ribosomal RNA small subunit methyltransferase F (474 aa).

S-adenosyl-L-methionine-binding positions include 121 to 127 (ASAPGSK), Glu-145, Asp-172, and Asp-190. The active-site Nucleophile is the Cys-243.

It belongs to the class I-like SAM-binding methyltransferase superfamily. RsmB/NOP family.

It is found in the cytoplasm. The enzyme catalyses cytidine(1407) in 16S rRNA + S-adenosyl-L-methionine = 5-methylcytidine(1407) in 16S rRNA + S-adenosyl-L-homocysteine + H(+). Specifically methylates the cytosine at position 1407 (m5C1407) of 16S rRNA. This is Ribosomal RNA small subunit methyltransferase F from Shewanella piezotolerans (strain WP3 / JCM 13877).